A 958-amino-acid chain; its full sequence is Exosome complex exonuclease RRP44 (958 aa).

N-acetylmethionine is present on Met-1. N6-acetyllysine is present on Lys-18. Positions 64-182 (HYLLPDTNVL…FITNDRRNKE (119 aa)) constitute a PINc domain. Position 215 is a phosphoserine (Ser-215). The CSD1 domain maps to 227-319 (IFSEHLPLSK…LHDEGQNEED (93 aa)). The CSD2 domain occupies 372 to 438 (LFTPADKRIP…ETEVLLLEHD (67 aa)). Positions 467-792 (REDLRHLCIC…ADVIVHRLLA (326 aa)) constitute an RNB domain. The tract at residues 938–958 (PTDTSNMDLNGPKKKKMKLGK) is disordered. A compositionally biased stretch (basic residues) spans 949–958 (PKKKKMKLGK).

The protein belongs to the RNR ribonuclease family. In terms of assembly, component of the RNA exosome complex; within the complex interacts with EXOSC4, EXOSC7 and EXOSC9 of the exosome core complex (Exo-9). The catalytically inactive RNA exosome core complex (Exo-9) associates with the catalytic subunit EXOSC10/RRP6. Exo-9 may associate with DIS3 to form the nucleolar exosome complex, or DIS3L to form the cytoplasmic exosome complex. Exo-9 is formed by a hexameric base ring consisting of the heterodimers EXOSC4-EXOSC9, EXOSC5-EXOSC8 and EXOSC6-EXOSC7, and a cap ring consisting of EXOSC1, EXOSC2 and EXOSC3; DIS3 associates with the base ring of Exo-9. The RNA exosome complex associates with cofactors C1D/RRP47, MPHOSPH6/MPP6 and MTREX/MTR4. Interacts with DHX34; the interaction is RNA-independent. It depends on Mg(2+) as a cofactor. Requires Mn(2+) as cofactor. In terms of tissue distribution, widely expressed.

It localises to the cytoplasm. Its subcellular location is the nucleus. It is found in the nucleolus. The protein localises to the nucleoplasm. Putative catalytic component of the RNA exosome complex which has 3'-&gt;5' exoribonuclease activity and participates in a multitude of cellular RNA processing and degradation events. In the nucleus, the RNA exosome complex is involved in proper maturation of stable RNA species such as rRNA, snRNA and snoRNA, in the elimination of RNA processing by-products and non-coding 'pervasive' transcripts, such as antisense RNA species and promoter-upstream transcripts (PROMPTs), and of mRNAs with processing defects, thereby limiting or excluding their export to the cytoplasm. The RNA exosome may be involved in Ig class switch recombination (CSR) and/or Ig variable region somatic hypermutation (SHM) by targeting AICDA deamination activity to transcribed dsDNA substrates. In the cytoplasm, the RNA exosome complex is involved in general mRNA turnover and specifically degrades inherently unstable mRNAs containing AU-rich elements (AREs) within their 3' untranslated regions, and in RNA surveillance pathways, preventing translation of aberrant mRNAs. It seems to be involved in degradation of histone mRNA. DIS3 has both 3'-5' exonuclease and endonuclease activities. The polypeptide is Exosome complex exonuclease RRP44 (DIS3) (Homo sapiens (Human)).